A 936-amino-acid chain; its full sequence is Phosphoenolpyruvate carboxylase (936 aa).

Active-site residues include histidine 155 and lysine 595.

This sequence belongs to the PEPCase type 1 family. In terms of assembly, homotetramer. Mg(2+) serves as cofactor. Requires Mn(2+) as cofactor.

The catalysed reaction is oxaloacetate + phosphate = phosphoenolpyruvate + hydrogencarbonate. Its activity is regulated as follows. Exhibits positive allosteric property with acetyl-CoA and fructose 1,6-bisphosphate, and a negative one with L-aspartate and L-malate. Forms oxaloacetate, a four-carbon dicarboxylic acid source for the tricarboxylic acid cycle. This is Phosphoenolpyruvate carboxylase (ppc) from Rhodothermus marinus (Rhodothermus obamensis).